The primary structure comprises 350 residues: Arginine N-succinyltransferase (350 aa).

Position 125 (Leu125) interacts with succinyl-CoA. His229 (proton donor) is an active-site residue.

Belongs to the arginine N-succinyltransferase family.

It catalyses the reaction succinyl-CoA + L-arginine = N(2)-succinyl-L-arginine + CoA + H(+). It participates in amino-acid degradation; L-arginine degradation via AST pathway; L-glutamate and succinate from L-arginine: step 1/5. In terms of biological role, catalyzes the transfer of succinyl-CoA to arginine to produce N(2)-succinylarginine. This Yersinia pestis protein is Arginine N-succinyltransferase.